Here is a 142-residue protein sequence, read N- to C-terminus: Small heat shock protein IbpB (142 aa).

Residues 26–137 (AGESQSFPPY…APQRIAISER (112 aa)) form the sHSP domain.

This sequence belongs to the small heat shock protein (HSP20) family. In terms of assembly, homodimer. Forms homomultimers of about 100-150 subunits at optimal growth temperatures. Conformation changes to oligomers at high temperatures or high ionic concentrations. The decrease in size of the multimers is accompanied by an increase in chaperone activity.

The protein resides in the cytoplasm. In terms of biological role, associates with aggregated proteins, together with IbpA, to stabilize and protect them from irreversible denaturation and extensive proteolysis during heat shock and oxidative stress. Aggregated proteins bound to the IbpAB complex are more efficiently refolded and reactivated by the ATP-dependent chaperone systems ClpB and DnaK/DnaJ/GrpE. Its activity is ATP-independent. The sequence is that of Small heat shock protein IbpB from Klebsiella pneumoniae subsp. pneumoniae (strain ATCC 700721 / MGH 78578).